Consider the following 150-residue polypeptide: MEETLPSYEAASGAANLQEVKPQVLPLEEIKKIYKISYWWLCSIALIQTWWVLLGLLPIFFALEHYEVPYKWIFIIEMLYYELYLTLYVCWCYKLRSDFWNEAAKNRPNEERLSALGGWDFLRIPKKRVLVLRDAQSEKKQNNADASNLV.

The chain is Meiotic expression up-regulated protein 15 (meu15) from Schizosaccharomyces pombe (strain 972 / ATCC 24843) (Fission yeast).